The primary structure comprises 425 residues: Serine--tRNA ligase (425 aa).

Position 230 to 232 (230 to 232) interacts with L-serine; that stretch reads TAE. 261-263 is a binding site for ATP; sequence RSE. Glutamate 284 is an L-serine binding site. 348–351 is a binding site for ATP; the sequence is EISS. Residue serine 384 participates in L-serine binding.

It belongs to the class-II aminoacyl-tRNA synthetase family. Type-1 seryl-tRNA synthetase subfamily. Homodimer. The tRNA molecule binds across the dimer.

It localises to the cytoplasm. It catalyses the reaction tRNA(Ser) + L-serine + ATP = L-seryl-tRNA(Ser) + AMP + diphosphate + H(+). The enzyme catalyses tRNA(Sec) + L-serine + ATP = L-seryl-tRNA(Sec) + AMP + diphosphate + H(+). The protein operates within aminoacyl-tRNA biosynthesis; selenocysteinyl-tRNA(Sec) biosynthesis; L-seryl-tRNA(Sec) from L-serine and tRNA(Sec): step 1/1. Its function is as follows. Catalyzes the attachment of serine to tRNA(Ser). Is also able to aminoacylate tRNA(Sec) with serine, to form the misacylated tRNA L-seryl-tRNA(Sec), which will be further converted into selenocysteinyl-tRNA(Sec). The chain is Serine--tRNA ligase from Nitratidesulfovibrio vulgaris (strain DSM 19637 / Miyazaki F) (Desulfovibrio vulgaris).